Here is a 247-residue protein sequence, read N- to C-terminus: KLCAIWIYLDVLFSTASIMHLCAISLDRYVAIQNPIHHSRFNSRTKAFLKIIAVWTISVGISMPVPVFGLQDDSKVFKEGSCLLADDNFVLIGSFVAFFIPLTIMVITYFLTIKSLQKEATLCVSDPGTRAKLSSFSFLPQSSLSSEKLFQRSIHRETGSYAGRRTMQSISNEQKACKVLGIVFFLFVVMWCPFFVTNIMAVICKESCNEDVIGALLNVFVWIGYLSSAVNPLVYTLFNKTYRSAFA.

Position 1 (Lys-1) is a topological domain, extracellular. Residues 2 to 26 form a helical membrane-spanning segment; the sequence is LCAIWIYLDVLFSTASIMHLCAISL. The cysteines at positions 3 and 82 are disulfide-linked. Asp-10 contacts serotonin. The DRY motif; important for ligand-induced conformation changes signature appears at 27 to 29; sequence DRY. The Cytoplasmic portion of the chain corresponds to 27–46; sequence DRYVAIQNPIHHSRFNSRTK. A helical membrane pass occupies residues 47–70; sequence AFLKIIAVWTISVGISMPVPVFGL. Residues 71-87 lie on the Extracellular side of the membrane; the sequence is QDDSKVFKEGSCLLADD. A helical transmembrane segment spans residues 88–113; it reads NFVLIGSFVAFFIPLTIMVITYFLTI. Over 114–177 the chain is Cytoplasmic; that stretch reads KSLQKEATLC…QSISNEQKAC (64 aa). Position 135 is a phosphoserine (Ser-135). The helical transmembrane segment at 178–203 threads the bilayer; the sequence is KVLGIVFFLFVVMWCPFFVTNIMAVI. Asn-198 lines the serotonin pocket. The cysteines at positions 204 and 208 are disulfide-linked. Topologically, residues 204–211 are extracellular; the sequence is CKESCNED. A helical membrane pass occupies residues 212–237; the sequence is VIGALLNVFVWIGYLSSAVNPLVYTL. The NPxxY motif; important for ligand-induced conformation changes and signaling motif lies at 231 to 235; sequence NPLVY. The Cytoplasmic portion of the chain corresponds to 238-247; sequence FNKTYRSAFA.

It belongs to the G-protein coupled receptor 1 family. In terms of assembly, interacts (via C-terminus) with MPDZ and PATJ. May interact (via C-terminus) with MPP3, PRDX6, DLG4, DLG1, CASK, APBA1 and MAGI2. Interacts with GRM2 and DRD2; this may affect signaling. As to expression, detected in adult intestine, especially in mucosal epithelium, longitudinal and circular layers of muscularis externa and myenteric plexuses. Highly expressed in Paneth cells, and detected at lower levels in enterocytes (at protein level).

It is found in the cell membrane. Its subcellular location is the cell projection. It localises to the dendrite. The protein resides in the axon. The protein localises to the cytoplasmic vesicle. It is found in the membrane. Its subcellular location is the caveola. It localises to the presynapse. With respect to regulation, G-protein coupled receptor activity is regulated by lipids: oleamide increases HTR2A-mediated activity. Its function is as follows. G-protein coupled receptor for 5-hydroxytryptamine (serotonin). Also functions as a receptor for various drugs and psychoactive substances, including mescaline, psilocybin, 1-(2,5-dimethoxy-4-iodophenyl)-2-aminopropane (DOI) and lysergic acid diethylamide (LSD). Ligand binding causes a conformation change that triggers signaling via guanine nucleotide-binding proteins (G proteins) and modulates the activity of downstream effectors. HTR2A is coupled to G(q)/G(11) G alpha proteins and activates phospholipase C-beta, releasing diacylglycerol (DAG) and inositol 1,4,5-trisphosphate (IP3) second messengers that modulate the activity of phosphatidylinositol 3-kinase and promote the release of Ca(2+) ions from intracellular stores, respectively. Beta-arrestin family members inhibit signaling via G proteins and mediate activation of alternative signaling pathways. Affects neural activity, perception, cognition and mood. Plays a role in the regulation of behavior, including responses to anxiogenic situations and psychoactive substances. Plays a role in intestinal smooth muscle contraction, and may play a role in arterial vasoconstriction. The protein is 5-hydroxytryptamine receptor 2A (HTR2A) of Cavia porcellus (Guinea pig).